The following is a 440-amino-acid chain: MKVVLPDGRIPRRWYNILPDLPEPLDPPLDPETEEPIDIEKLKRIFAEELVKQEISRERYIEIPGELRKLYSKIGRPTPLFRATNLEKLLGTPARIYFKYEGATVTGSHKINTALAQAYYAKKQGIERLVTETGAGQWGTALSLAGALLGLKVRVYMARASYQQKPYRKTLMRIYGAEVFPSPSENTEVGKRFLKEDPNHPGSLGIAISEAIEDVLKDEKARYSLGSVLNHVLMHQTVIGLEAKEQMEEFEEPDVIIGCVGGGSNFAGLAYPFVKDVLDGKSEYEFIAVEPKAAPTMTRGVYTYDYGDSAGLTPKLKMHTLGHRYYVPPIHAGGLRYHGLAPTLSVLINHGIVKPIAYHQTEVFEAAVLFAKAEGIVPAPESAHAVKAVIDKALEARREGKEMVILFNLSGHGLLDLKGYEDYLDGKLEDYEPRDLPVKS.

Position 110 is an N6-(pyridoxal phosphate)lysine (Lys110).

It belongs to the TrpB family. Tetramer of two alpha and two beta chains. Requires pyridoxal 5'-phosphate as cofactor.

It carries out the reaction (1S,2R)-1-C-(indol-3-yl)glycerol 3-phosphate + L-serine = D-glyceraldehyde 3-phosphate + L-tryptophan + H2O. It participates in amino-acid biosynthesis; L-tryptophan biosynthesis; L-tryptophan from chorismate: step 5/5. In terms of biological role, the beta subunit is responsible for the synthesis of L-tryptophan from indole and L-serine. The chain is Tryptophan synthase beta chain 2 (trpB2) from Pyrococcus abyssi (strain GE5 / Orsay).